Consider the following 507-residue polypeptide: ATP synthase subunit alpha, chloroplastic (507 aa).

170-177 provides a ligand contact to ATP; the sequence is GDRQTGKT.

The protein belongs to the ATPase alpha/beta chains family. As to quaternary structure, F-type ATPases have 2 components, CF(1) - the catalytic core - and CF(0) - the membrane proton channel. CF(1) has five subunits: alpha(3), beta(3), gamma(1), delta(1), epsilon(1). CF(0) has four main subunits: a, b, b' and c.

It is found in the plastid. The protein localises to the chloroplast thylakoid membrane. It catalyses the reaction ATP + H2O + 4 H(+)(in) = ADP + phosphate + 5 H(+)(out). In terms of biological role, produces ATP from ADP in the presence of a proton gradient across the membrane. The alpha chain is a regulatory subunit. The polypeptide is ATP synthase subunit alpha, chloroplastic (Nicotiana tabacum (Common tobacco)).